A 388-amino-acid chain; its full sequence is Xylose isomerase (388 aa).

Residues H54 and D57 contribute to the active site. 7 residues coordinate Mg(2+): E181, E217, H220, D245, D255, D257, and D287.

This sequence belongs to the xylose isomerase family. Homotetramer. It depends on Mg(2+) as a cofactor.

The protein resides in the cytoplasm. The catalysed reaction is alpha-D-xylose = alpha-D-xylulofuranose. In Streptomyces thermocyaneoviolaceus, this protein is Xylose isomerase.